The following is a 461-amino-acid chain: Pancreatic triacylglycerol lipase (461 aa).

A signal peptide spans 1 to 12; that stretch reads WTLSLLLGAVVG. Intrachain disulfides connect Cys-16–Cys-22 and Cys-103–Cys-114. Ser-165 serves as the catalytic Nucleophile. Asp-189 acts as the Charge relay system in catalysis. Residues Glu-200, Arg-203, Asp-205, and Asp-208 each contribute to the Ca(2+) site. Cys-250 and Cys-274 are joined by a disulfide. His-276 (charge relay system) is an active-site residue. 3 disulfide bridges follow: Cys-298–Cys-309, Cys-312–Cys-317, and Cys-445–Cys-461. The region spanning 351–461 is the PLAT domain; sequence WRYRVDVTLS…EDVLLTLTAC (111 aa).

The protein belongs to the AB hydrolase superfamily. Lipase family. In terms of assembly, forms a 1:1 stoichiometric complex with (pro)colipase/CLPS.

Its subcellular location is the secreted. It catalyses the reaction a triacylglycerol + H2O = a diacylglycerol + a fatty acid + H(+). The enzyme catalyses 1,2,3-tributanoylglycerol + H2O = dibutanoylglycerol + butanoate + H(+). The catalysed reaction is 1,2,3-tri-(9Z-octadecenoyl)-glycerol + H2O = di-(9Z)-octadecenoylglycerol + (9Z)-octadecenoate + H(+). It carries out the reaction all-trans-retinyl hexadecanoate + H2O = all-trans-retinol + hexadecanoate + H(+). It catalyses the reaction 1,2-di-(9Z-octadecenoyl)-glycerol + H2O = (9Z-octadecenoyl)-glycerol + (9Z)-octadecenoate + H(+). With respect to regulation, inhibited by bile salts, is reactivated by (pro)colipase/CLPS. Functionally, plays an important role in fat metabolism. It preferentially splits the esters of long-chain fatty acids at positions 1 and 3, producing mainly 2-monoacylglycerol and free fatty acids, and shows considerably higher activity against insoluble emulsified substrates than against soluble ones. The sequence is that of Pancreatic triacylglycerol lipase (PNLIP) from Equus caballus (Horse).